We begin with the raw amino-acid sequence, 67 residues long: Protein AaeX (67 aa).

Transmembrane regions (helical) follow at residues 3-23 (LFPVIVVFGLSFPPIFFELLL) and 47-67 (PALFNTALYCCLFYLISRLFV).

The protein belongs to the AaeX family.

The protein localises to the cell membrane. The chain is Protein AaeX from Escherichia coli O157:H7.